Consider the following 415-residue polypeptide: Histidine--tRNA ligase (415 aa).

This sequence belongs to the class-II aminoacyl-tRNA synthetase family. Homodimer.

The protein resides in the cytoplasm. The enzyme catalyses tRNA(His) + L-histidine + ATP = L-histidyl-tRNA(His) + AMP + diphosphate + H(+). The chain is Histidine--tRNA ligase from Rickettsia felis (strain ATCC VR-1525 / URRWXCal2) (Rickettsia azadi).